We begin with the raw amino-acid sequence, 160 residues long: Baculoviral IAP repeat-containing protein 5.1-B (160 aa).

The BIR repeat unit spans residues 13–83 (QRLQDFRNMY…EGWEPDDDPW (71 aa)). Threonine 43 carries the post-translational modification Phosphothreonine; by CDK1. Cysteine 66, cysteine 69, histidine 86, and cysteine 93 together coordinate Zn(2+).

This sequence belongs to the IAP family. As to quaternary structure, component of the CPC at least composed of survivin/birc5, incenp, cdca8/borealin and/or cdca9/dasra-A, and aurkb/aurora-B. Interacts directly with incenp (via N-terminus), and may weakly interact with aurkb (via N-terminus) to stabilize the complex. Interacts with GTP-bound ran in both the S and M phases of the cell cycle. Also found in a complex with ubiquitin-mediated signaling proteins including at least usp9x/xFAM, nploc4/npl4 and ufd1. Post-translationally, ubiquitination is required for centrosome-targeting.

It is found in the cytoplasm. The protein localises to the nucleus. The protein resides in the chromosome. Its subcellular location is the centromere. It localises to the cytoskeleton. It is found in the spindle. In terms of biological role, component of the chromosomal passenger complex (CPC), a complex that acts as a key regulator of mitosis. The CPC complex has essential functions at the centromere in ensuring correct chromosome alignment and segregation and is required for chromatin-induced microtubule stabilization and spindle assembly. Stimulates the mitotic kinase activity of aurkb/aurora-B in the CPC. Does not appear to exhibit anti-apoptotic activity. CPC. Does not appear to exhibit anti-apoptotic activity. In Xenopus laevis (African clawed frog), this protein is Baculoviral IAP repeat-containing protein 5.1-B (birc5.1-b).